An 861-amino-acid polypeptide reads, in one-letter code: Probable alpha,alpha-trehalose-phosphate synthase [UDP-forming] 10 (861 aa).

Serine 5 bears the Phosphoserine mark. Threonine 32 is modified (phosphothreonine). Residues 59 to 546 (ERKIIVANFL…ARSFSQDLER (488 aa)) form a glycosyltransferase region.

In the N-terminal section; belongs to the glycosyltransferase 20 family. The protein in the C-terminal section; belongs to the trehalose phosphatase family.

The enzyme catalyses D-glucose 6-phosphate + UDP-alpha-D-glucose = alpha,alpha-trehalose 6-phosphate + UDP + H(+). The sequence is that of Probable alpha,alpha-trehalose-phosphate synthase [UDP-forming] 10 (TPS10) from Arabidopsis thaliana (Mouse-ear cress).